We begin with the raw amino-acid sequence, 73 residues long: UPF0499 protein NFIA_054990 (73 aa).

Positions Met-1–Ala-20 are cleaved as a signal peptide. Cystine bridges form between Cys-46/Cys-60, Cys-50/Cys-63, and Cys-56/Cys-70.

It belongs to the UPF0499 family.

It localises to the secreted. This Neosartorya fischeri (strain ATCC 1020 / DSM 3700 / CBS 544.65 / FGSC A1164 / JCM 1740 / NRRL 181 / WB 181) (Aspergillus fischerianus) protein is UPF0499 protein NFIA_054990.